A 912-amino-acid chain; its full sequence is MSNPSRPKKRVYPTAQYVAPSSPSMPFQGGAFSGQTMQSQVSGSASPYMAPSGQFTQPMNASDAQNQPQFMTPAQQQLKQQISQATTSMNDMHLHNVPVIDPNAYYQPNNGNNIQPTGENKPSLTPGRPTNNLYPVDILTELPPKINDLNLLPPPILLEPEISTKFSESVYASPDYIRSTLNAVPQSNALLKKSKLPFALIIKPFKHLHDMNAPLPCNEDEFVIRCRRCRGYLNPFVKILQVESKWRCNFCGCINGFPDGSEHFQLPNLYNRNELTYSSMDFLPSSSYSQQVKEEPPAVYTFVIDVSINTIKNGYLFSVANALVNSLDLIPNHDNKTLISLICADSSLHYFSVPLDTEDGPKESSMFDISDLDEPFLPTSNSLLVSLSQCRNNLEHLLLKIPEIFKSTTIQSFALGPALQNASELVKDKGGKVIVCSSTLPNMGIGKLNPRDERGISNTSKESKDLLSCQDAFYRSFTVECNKLQITIDLFIASGNYMDIATLSNLSKYTGGQTHFYPQFLGSVAADFTKFSKEFSRHLSMDLSFRTVMRPRCSIGLRIEDSYGHLFNRSTDLCSFPAMPRDQSYVVELSIEDKLTADYCYAQIAFLYSTGTGKRKIRVLTLALPTTTILHNVFASADQLAIATYFARIATEKVMKNSFDHARSFLNTSLEEILINYRKEIVVENNAGGVTLRFSTNLKMLPLLVHMLLKNIAFRKGVIPSDLRAIALNNMESLPLKYLIKNAYPTVYSLHDIPDEAGLPDENGVIVMPPPMNDTISSFEKYGLYLINTPNELILWVGGNAIPELVSDVFGLQDVFQVPNGKNELPELPESEFNQRLRSIIENIRANDDEQITYQTLYIVRGNSQNEPANSSQNKEIVPLRNWAVSFLVEDNVVGCESYREFLQNLKTRLNK.

Basic residues predominate over residues 1–11 (MSNPSRPKKRV). Disordered stretches follow at residues 1–83 (MSNP…QQIS) and 102–129 (PNAY…PGRP). 3 stretches are compositionally biased toward polar residues: residues 33–45 (SGQT…SGSA), 53–74 (GQFT…MTPA), and 106–129 (YQPN…PGRP). Residues cysteine 226, cysteine 229, cysteine 248, and cysteine 251 each contribute to the Zn(2+) site. The tract at residues 226-251 (CRRCRGYLNPFVKILQVESKWRCNFC) is zinc finger-like.

It belongs to the SEC23/SEC24 family. SEC24 subfamily. In terms of assembly, the COPII coat is composed of at least 5 proteins: the SEC23/24 complex, the SEC13/31 complex, and the protein SAR1. Golgi apparatus membrane; Peripheral membrane protein; Cytoplasmic side.

The protein resides in the cytoplasm. The protein localises to the cytoplasmic vesicle. It localises to the COPII-coated vesicle membrane. Its subcellular location is the endoplasmic reticulum membrane. It is found in the golgi apparatus membrane. Component of the coat protein complex II (COPII) which promotes the formation of transport vesicles from the endoplasmic reticulum (ER). The coat has two main functions, the physical deformation of the endoplasmic reticulum membrane into vesicles and the selection of cargo molecules. The protein is Protein transport protein SEC24-2 (SEC242) of Naumovozyma castellii (Yeast).